The following is a 728-amino-acid chain: Microtubule-associated protein VP5 (728 aa).

This sequence belongs to the reoviridae microtubule-associated protein family.

It localises to the virion. The protein localises to the host cytoplasm. The protein resides in the host cytoskeleton. Functionally, minor inner capsid component. Displays NTPase and RNA 5'-triphosphatase (RTPase) activities. May function as a cofactor of polymerase. Associates with microtubules and plays a role in the formation, structural organization and morphology of viral inclusions, where the assembly of cores and the replication of viral RNA occur. The protein is Microtubule-associated protein VP5 (S5) of Ctenopharyngodon idella (Grass carp).